Reading from the N-terminus, the 501-residue chain is Aldehyde dehydrogenase, cytosolic 1 (501 aa).

Serine 2 is subject to N-acetylserine. Residues lysine 91 and lysine 128 each carry the N6-acetyllysine modification. 246-251 is an NAD(+) binding site; it reads GSTEVG. Lysine 252 is subject to N6-acetyllysine. Residue glutamate 269 is the Proton acceptor of the active site. Catalysis depends on cysteine 303, which acts as the Nucleophile. 3 positions are modified to N6-acetyllysine: lysine 353, lysine 367, and lysine 410. Position 413 is a phosphoserine (serine 413). An N6-acetyllysine mark is found at lysine 419 and lysine 435.

It belongs to the aldehyde dehydrogenase family. In terms of assembly, homotetramer. As to expression, highest level in liver, high level in lung, low level in kidney and testis.

The protein localises to the cytoplasm. The enzyme catalyses an aldehyde + NAD(+) + H2O = a carboxylate + NADH + 2 H(+). The protein operates within alcohol metabolism; ethanol degradation; acetate from ethanol: step 2/2. In terms of biological role, can oxidize benzaldehyde, propionaldehyde and acetaldehyde. No detectable activity with retinal. The polypeptide is Aldehyde dehydrogenase, cytosolic 1 (Mus musculus (Mouse)).